The chain runs to 372 residues: Zinc finger protein dpff-1 (372 aa).

Residues Val-108–Tyr-204 are disordered. Residues Gly-109–Thr-131 are compositionally biased toward polar residues. Basic and acidic residues predominate over residues Gln-132–Tyr-141. A compositionally biased stretch (acidic residues) spans Val-142–Asp-158. Residues Thr-184–Arg-196 show a composition bias toward polar residues. Residues Tyr-212–His-235 form a C2H2-type zinc finger. 2 consecutive PHD-type zinc fingers follow at residues Ser-256–Cys-314 and Ile-316–Glu-361.

Belongs to the requiem/DPF family.

It is found in the nucleus. The protein localises to the cytoplasm. Functionally, probable transcription factor, involved in meiosis and stress protection. This chain is Zinc finger protein dpff-1, found in Caenorhabditis elegans.